We begin with the raw amino-acid sequence, 304 residues long: N-acetyl-D-glucosamine kinase (304 aa).

Residues 4-11 (GFDIGGTK) and 133-140 (GFGGGLIF) each bind ATP. Positions 157, 178, 180, and 185 each coordinate Zn(2+).

The protein belongs to the ROK (NagC/XylR) family. NagK subfamily.

The enzyme catalyses N-acetyl-D-glucosamine + ATP = N-acetyl-D-glucosamine 6-phosphate + ADP + H(+). It functions in the pathway cell wall biogenesis; peptidoglycan recycling. Functionally, catalyzes the phosphorylation of N-acetyl-D-glucosamine (GlcNAc) derived from cell-wall degradation, yielding GlcNAc-6-P. This chain is N-acetyl-D-glucosamine kinase, found in Pasteurella multocida (strain Pm70).